Here is a 323-residue protein sequence, read N- to C-terminus: MIDFGNFYSLIAKNHLSHWLETLPAQIANWQREQQHGLFKQWSNAVEFLPEIKPYRLDLLHSVTAESEEPLSTGQIKRIETLMRNLMPWRKGPFSLYGVNIDTEWRSDWKWDRVLPHLSDLTGRTILDVGCGSGYHMWRMIGAGAHLAVGIDPTQLFLCQFEAVRKLLGNDQRAHLIPLGIEQLPALKAFDTVFSMGVLYHRRSPLEHLWQLKDQLVNEGELVLETLVIDGDENTVLVPGDRYAQMRNVYFIPSALALKNWLKKCGFVDIRIVDVCVTTTEEQRRTEWMVTESLSDFLDPHDPSKTVEGYPAPKRAVLIARKP.

Carboxy-S-adenosyl-L-methionine contacts are provided by residues Lys91, Trp105, Lys110, Gly130, 152–154, 181–182, Met196, Tyr200, and Arg315; these read DPT and IE.

It belongs to the class I-like SAM-binding methyltransferase superfamily. CmoB family. As to quaternary structure, homotetramer.

It catalyses the reaction carboxy-S-adenosyl-L-methionine + 5-hydroxyuridine(34) in tRNA = 5-carboxymethoxyuridine(34) in tRNA + S-adenosyl-L-homocysteine + H(+). Its function is as follows. Catalyzes carboxymethyl transfer from carboxy-S-adenosyl-L-methionine (Cx-SAM) to 5-hydroxyuridine (ho5U) to form 5-carboxymethoxyuridine (cmo5U) at position 34 in tRNAs. This Escherichia coli (strain SE11) protein is tRNA U34 carboxymethyltransferase.